We begin with the raw amino-acid sequence, 437 residues long: Protein translocase subunit SecY (437 aa).

Transmembrane regions (helical) follow at residues 19 to 39 (LFTLGIIVIYRIGTHIPIPGV), 69 to 89 (LLQITIFALGIMPYITASIIL), 122 to 142 (VALAVLQGTGLVATARSGALF), 157 to 177 (IFTTLTMVVTMTAGTAVVMWL), 189 to 209 (GMSILMFISIAATFPSALWSI), 219 to 239 (WIEFGIVIAVGLVMVALVVFV), 275 to 295 (GIIPVIFASSLLYIPALVVQF), 318 to 338 (HITVYFFLIIFFAFFYVAISF), 378 to 398 (GSLYLGLIALVPTMALAPLGA), and 400 to 420 (QNFPFGGTSILIIVGVGLETV).

Belongs to the SecY/SEC61-alpha family. Component of the Sec protein translocase complex. Heterotrimer consisting of SecY, SecE and SecG subunits. The heterotrimers can form oligomers, although 1 heterotrimer is thought to be able to translocate proteins. Interacts with the ribosome. Interacts with SecDF, and other proteins may be involved. Interacts with SecA.

Its subcellular location is the cell membrane. Its function is as follows. The central subunit of the protein translocation channel SecYEG. Consists of two halves formed by TMs 1-5 and 6-10. These two domains form a lateral gate at the front which open onto the bilayer between TMs 2 and 7, and are clamped together by SecE at the back. The channel is closed by both a pore ring composed of hydrophobic SecY resides and a short helix (helix 2A) on the extracellular side of the membrane which forms a plug. The plug probably moves laterally to allow the channel to open. The ring and the pore may move independently. The sequence is that of Protein translocase subunit SecY from Streptomyces scabiei.